We begin with the raw amino-acid sequence, 187 residues long: Elongation factor P (187 aa).

It belongs to the elongation factor P family.

The protein localises to the cytoplasm. The protein operates within protein biosynthesis; polypeptide chain elongation. Involved in peptide bond synthesis. Stimulates efficient translation and peptide-bond synthesis on native or reconstituted 70S ribosomes in vitro. Probably functions indirectly by altering the affinity of the ribosome for aminoacyl-tRNA, thus increasing their reactivity as acceptors for peptidyl transferase. The protein is Elongation factor P of Synechococcus sp. (strain CC9311).